The sequence spans 390 residues: LIM/homeobox protein Lhx4 (390 aa).

2 consecutive LIM zinc-binding domains span residues 28-87 (PQCA…RFGT) and 88-150 (KCTA…AKQN). The homeobox DNA-binding region spans 157-216 (AKRPRTTITAKQLETLKNAYKNSPKPARHVREQLSSETGLDMRVVQVWFQNRRAKEKRLK). The segment at 161 to 181 (RTTITAKQLETLKNAYKNSPK) is interaction with DNA. The tract at residues 199-211 (RVVQVWFQNRRAK) is interaction with 5-mCpG DNA. 2 disordered regions span residues 230 to 253 (SVKRSRGSSKQEKESSAEDCGVSD) and 356 to 390 (AGGPTSDISTGSSVGYPDFPTSPGSWLDEMDHPPF).

Its subcellular location is the nucleus. Functionally, may play a critical role in the development of respiratory control mechanisms and in the normal growth and maturation of the lung. Binds preferentially to methylated DNA. In Homo sapiens (Human), this protein is LIM/homeobox protein Lhx4 (LHX4).